A 374-amino-acid chain; its full sequence is Actin-related protein 2/3 complex subunit 2B (374 aa).

It belongs to the ARPC2 family. Component of the Arp2/3 complex composed of ARP2, ARP3, ARPC1/p41-ARC, ARPC2/p34-ARC, ARPC3/p21-ARC, ARPC4/p20-ARC and ARPC5/p16-ARC. As to expression, expressed at low levels in all tissues with a relatively highest expression in inflorescences.

Its subcellular location is the cytoplasm. It localises to the cytoskeleton. It is found in the cell projection. Its function is as follows. Functions as actin-binding component of the Arp2/3 complex which is involved in regulation of actin polymerization and together with an activating nucleation-promoting factor (NPF) mediates the formation of branched actin networks. Seems to contact the mother actin filament. Arp2/3 complex plays a critical role in the control of cell morphogenesis via the modulation of cell polarity development. The sequence is that of Actin-related protein 2/3 complex subunit 2B (ARPC2B) from Arabidopsis thaliana (Mouse-ear cress).